The sequence spans 321 residues: Small ribosomal subunit biogenesis GTPase RsgA (321 aa).

One can recognise a CP-type G domain in the interval 89 to 248; sequence QSWINRPPVA…VADTPGFNRP (160 aa). GTP-binding positions include 138–141 and 190–198; these read TKRD and GPSGVGKTS. Zn(2+) contacts are provided by cysteine 273, cysteine 278, histidine 280, and cysteine 286.

This sequence belongs to the TRAFAC class YlqF/YawG GTPase family. RsgA subfamily. In terms of assembly, monomer. Associates with 30S ribosomal subunit, binds 16S rRNA. It depends on Zn(2+) as a cofactor.

It localises to the cytoplasm. In terms of biological role, one of several proteins that assist in the late maturation steps of the functional core of the 30S ribosomal subunit. Helps release RbfA from mature subunits. May play a role in the assembly of ribosomal proteins into the subunit. Circularly permuted GTPase that catalyzes slow GTP hydrolysis, GTPase activity is stimulated by the 30S ribosomal subunit. This Prochlorococcus marinus (strain MIT 9313) protein is Small ribosomal subunit biogenesis GTPase RsgA.